The primary structure comprises 574 residues: MNQTRVFLIFAWLMVAALLWMEWGKDKAAANAPVAAATQAVPAARDPDAAAPSAANVPSAQPIPQAGAPGTVPATSSTAATPAAAGAAPVVTLTSDVLRLKLDGRSVLDAELLQFPQTKDGTEPVSLLTEDPAHPYNATSGWASEHSPVPGVGGFRAEQPGTTFEMAKGQNTLVVPFVWNGPDGVSIRRTFTLERGRYAISIKDEVINKSGAPWNGYVFRKLSRVPTILSRGMTNPDSFSFNGATWYSPQEGYERRAFKDYMDDGGLNRQITGGWVALLQHHFFTAWIPQKDQASLYVLAQDGPRDVAELRGPAFTVAPGQTASTEARLWVGPKLVNLIAKEDVKGLDRVVDYSRFSIMAIIGQGLFWVLSHLHSFLHNWGWAIIGLVVLLRLALYPLSAAQYKSGAKMRRFQPRLAQLKERYGDDRVKYQQATMELFKKEKINPMGGCLPLLIQMPIFFALYWVLVESVELRQAPWLGWIQDLTARDPYFILPLLNISIMWATQKLTPTPGMDPMQAKMMQFMPLVFGVMMAFMPAGLVLYWVVNGGLGLLIQWWMIRQHGEKPSKIIQANAK.

The helical transmembrane segment at 6 to 26 (VFLIFAWLMVAALLWMEWGKD) threads the bilayer. The interval 45 to 77 (RDPDAAAPSAANVPSAQPIPQAGAPGTVPATSS) is disordered. 5 helical membrane-spanning segments follow: residues 356 to 376 (FSIM…LHSF), 380 to 400 (WGWA…PLSA), 447 to 467 (GGCL…WVLV), 489 to 509 (PYFI…KLTP), and 525 to 545 (PLVF…YWVV).

Belongs to the OXA1/ALB3/YidC family. Type 1 subfamily. Interacts with the Sec translocase complex via SecD. Specifically interacts with transmembrane segments of nascent integral membrane proteins during membrane integration.

It localises to the cell inner membrane. Its function is as follows. Required for the insertion and/or proper folding and/or complex formation of integral membrane proteins into the membrane. Involved in integration of membrane proteins that insert both dependently and independently of the Sec translocase complex, as well as at least some lipoproteins. Aids folding of multispanning membrane proteins. This Xanthomonas euvesicatoria pv. vesicatoria (strain 85-10) (Xanthomonas campestris pv. vesicatoria) protein is Membrane protein insertase YidC.